A 444-amino-acid chain; its full sequence is Glycine receptor subunit alphaZ1 (444 aa).

Residues 1–24 (MFALGIYLWETIVFFSLAASQQAA) form the signal peptide. At 25-246 (ARKAASPMPP…RFHLERQMGY (222 aa)) the chain is on the extracellular side. N62 is a glycosylation site (N-linked (GlcNAc...) asparagine). Glycine-binding residues include R89 and S153. A disulfide bridge links C162 with C176. Zn(2+)-binding residues include E216 and D218. C222 and C233 form a disulfide bridge. Strychnine is bound at residue 226–231 (YNTGKF). Position 228 (T228) interacts with glycine. H239 provides a ligand contact to Zn(2+). Residues 247-268 (YLIQMYIPSLLIVILSWVSFWI) traverse the membrane as a helical segment. The Cytoplasmic portion of the chain corresponds to 269–273 (NMDAA). Residues 274–294 (PARVGLGITTVLTMTTQSSGS) traverse the membrane as a helical segment. The Extracellular portion of the chain corresponds to 295–305 (RASLPKVSYVK). A helical membrane pass occupies residues 306-326 (AIDIWMAVCLLFVFSALLEYA). Topologically, residues 327–412 (AVNFIARQHK…FISRAKRIDT (86 aa)) are cytoplasmic. Residues 413–433 (VSRVAFPLVFLIFNIFYWITY) form a helical membrane-spanning segment. At 434 to 444 (KIIRSEDIHKQ) the chain is on the extracellular side.

This sequence belongs to the ligand-gated ion channel (TC 1.A.9) family. Glycine receptor (TC 1.A.9.3) subfamily. GLRA1 sub-subfamily. As to quaternary structure, homopentamer (in vitro). Heteropentamer composed of glra1 and glrb. Both homopentamers and heteropentamers form functional ion channels. Interacts with glrb. In terms of tissue distribution, expressed in brain.

The protein localises to the postsynaptic cell membrane. It is found in the synapse. It localises to the perikaryon. Its subcellular location is the cell projection. The protein resides in the dendrite. The protein localises to the cell membrane. The catalysed reaction is chloride(in) = chloride(out). Activated by glycine and taurine. Inhibited by strychnine. Allosterically activated by ivermectin. Inhibited by picrotoxinin. Strychnine binding locks the channel in a closed conformation and prevents channel opening in response to extracellular glycine. Can also be activated by GABA and inhibited by bicuculline, but this requires heterologous expression in human cells. Subunit of heteromeric glycine-gated chloride channels. Plays an important role in the down-regulation of neuronal excitability. Contributes to the generation of inhibitory postsynaptic currents. Channel activity is potentiated by ethanol. The chain is Glycine receptor subunit alphaZ1 (glra1) from Danio rerio (Zebrafish).